Here is a 304-residue protein sequence, read N- to C-terminus: ATP phosphoribosyltransferase (304 aa).

Belongs to the ATP phosphoribosyltransferase family. Long subfamily. Requires Mg(2+) as cofactor.

The protein resides in the cytoplasm. It carries out the reaction 1-(5-phospho-beta-D-ribosyl)-ATP + diphosphate = 5-phospho-alpha-D-ribose 1-diphosphate + ATP. Its pathway is amino-acid biosynthesis; L-histidine biosynthesis; L-histidine from 5-phospho-alpha-D-ribose 1-diphosphate: step 1/9. With respect to regulation, feedback inhibited by histidine. In terms of biological role, catalyzes the condensation of ATP and 5-phosphoribose 1-diphosphate to form N'-(5'-phosphoribosyl)-ATP (PR-ATP). Has a crucial role in the pathway because the rate of histidine biosynthesis seems to be controlled primarily by regulation of HisG enzymatic activity. This chain is ATP phosphoribosyltransferase, found in Xanthomonas euvesicatoria pv. vesicatoria (strain 85-10) (Xanthomonas campestris pv. vesicatoria).